The following is a 976-amino-acid chain: LRR receptor-like serine/threonine-protein kinase ERECTA (976 aa).

An N-terminal signal peptide occupies residues 1–24 (MALFRDIVLLGFLFCLSLVATVTS). Residues 25–580 (EEGATLLEIK…RRTVRVSISR (556 aa)) lie on the Extracellular side of the membrane. N65 and N74 each carry an N-linked (GlcNAc...) asparagine glycan. LRR repeat units follow at residues 69 to 92 (NVVALNLSDLNLDGEISPAIGDLK), 93 to 115 (SLLSIDLRGNRLSGQIPDEIGDC), 117 to 140 (SLQNLDLSFNELSGDIPFSISKLK), 141 to 163 (QLEQLILKNNQLIGPIPSTLSQI), 165 to 187 (NLKILDLAQNKLSGEIPRLIYWN), 189 to 212 (VLQYLGLRGNNLVGNISPDLCQLT), 213 to 235 (GLWYFDVRNNSLTGSIPETIGNC), 237 to 259 (AFQVLDLSYNQLTGEIPFDIGFL), 260 to 282 (QVATLSLQGNQLSGKIPSVIGLM), 284 to 306 (ALAVLDLSGNLLSGSIPPILGNL), 308 to 330 (FTEKLYLHSNKLTGSIPPELGNM), 332 to 355 (KLHYLELNDNHLTGHIPPELGKLT), 356 to 379 (DLFDLNVANNDLEGPIPDHLSSCT), 380 to 401 (NLNSLNVHGNKFSGTIPRAFQK), 404 to 425 (SMTYLNLSSNNIKGPIPVELSR), 428 to 449 (NLDTLDLSNNKINGIIPSSLGD), 452 to 473 (HLLKMNLSRNHITGVVPGDFGN), 476 to 498 (SIMEIDLSNNDISGPIPEELNQL), 500 to 522 (NIILLRLENNNLTGNVGSLANCL), and 523 to 545 (SLTVLNVSHNNLVGDIPKNNNFS). N-linked (GlcNAc...) asparagine glycans are attached at residues N221 and N234. Residues N305 and N329 are each glycosylated (N-linked (GlcNAc...) asparagine). N-linked (GlcNAc...) asparagine glycosylation is present at N409. An N-linked (GlcNAc...) asparagine glycan is attached at N457. N510, N528, and N543 each carry an N-linked (GlcNAc...) asparagine glycan. Residues 581-601 (AAILGIAIGGLVILLMVLIAA) traverse the membrane as a helical segment. Residues 602–976 (CRPHNPPPFL…FGQVISQNSE (375 aa)) are Cytoplasmic-facing. The residue at position 645 (T645) is a Phosphothreonine. Positions 648–918 (LSEKYIIGHG…QVTRVLGSFM (271 aa)) constitute a Protein kinase domain. Residues 654-662 (IGHGASSTV) and K676 each bind ATP. Phosphotyrosine occurs at positions 721 and 760. D773 (proton acceptor) is an active-site residue. Y815 bears the Phosphotyrosine mark. The residue at position 823 (T823) is a Phosphothreonine.

The protein belongs to the protein kinase superfamily. Ser/Thr protein kinase family. As to quaternary structure, homodimer and heterodimer with ERL1 and TMM. Interacts with EPF1, EPF2, EPFL4, EPFL5 and EPFL6. Interacts with SERK1, SERK2, SERK3/BAK1 and SERK4 in a EPF2-induced manner. Interacts with EPFL9/STOMAGEN. In terms of tissue distribution, mostly expressed in shoot apical meristems (SAM), organ primordia, flowers, siliques and young rosette leaves, and, to a lower extent, in stems and cauline leaves. Expressed in growing inflorescence stems and pedicels. Detected in epidermis, phloem and xylem.

The protein resides in the cell membrane. The enzyme catalyses L-seryl-[protein] + ATP = O-phospho-L-seryl-[protein] + ADP + H(+). It catalyses the reaction L-threonyl-[protein] + ATP = O-phospho-L-threonyl-[protein] + ADP + H(+). Functionally, receptor kinase that, together with ERL1 and ERL2, regulates aerial architecture, including inflorescence (e.g. shoot apical meristem-originating organ shape, elongation of the internode and pedicels, and adaxial-abaxial polarity), and stomatal patterning (e.g. density and clustering), probably by tuning cell division and expansion. Redundantly involved with ERL1 in procambial development regulation. Forms a functional ligand-receptor pair with EPF2 (AC Q8LC53). Modulates plant transpiration efficiency by controlling stomatal density, leaf photosynthetic capacity, epidermal cell expansion, mesophyll cell proliferation and cell-cell contact. A phloem-specific expression of ER is sufficient for proper inflorescence architecture. Probable major trait regulating canalization (maintenance of phenotype despite varying environment) in many aspect of the plant physiology (e.g. plant morphology, light-dependent leaves number, branch number, flowering time, phytate and mineral concentrations) by transducing microenvironmental variation into phenotypic differentiation (ecological amplifier). May maintain development integrity in heat stress conditions. Regulates cell wall composition and structure. Confers resistance to the pathogenic bacteria Ralstonia solanacearum and to the necrotrophic fungi Plectosphaerella cucumerina and Pythium irregulare, and required for callose deposition upon infection. Resistance to P.cucumerina seems cell wall-mediated. Forms a constitutive complex with TMM involved in the recognition of the stomatal regulatory peptides EPF1, EPF2 and EPFL9/STOMAGEN. This Arabidopsis thaliana (Mouse-ear cress) protein is LRR receptor-like serine/threonine-protein kinase ERECTA.